The following is a 933-amino-acid chain: Probable Rho-type GTPase-activating protein 4 (933 aa).

LIM zinc-binding domains lie at 22-80 and 81-129; these read CFCI…LCVD and ICNG…CLPC. 2 disordered regions span residues 181-200 and 304-338; these read PSSV…NSLR and ENGT…STTT. Over residues 325-338 the composition is skewed to polar residues; the sequence is RSSTMNYKSVSTTT. Ser353 carries the post-translational modification Phosphoserine. Disordered regions lie at residues 415 to 435, 605 to 628, and 641 to 660; these read RLSS…NYEA, SSSF…SPRE, and GFRP…KRNS. Residues 619-628 show a composition bias toward polar residues; sequence RTISTPSPRE. Position 625 is a phosphoserine (Ser625). The span at 643-652 shows a compositional bias: basic and acidic residues; the sequence is RPKDNKDKES. A phosphoserine mark is found at Ser738 and Ser740. The region spanning 753-932 is the Rho-GAP domain; that stretch reads NRLTLLRVPT…FLIDHVHEVF (180 aa).

Functionally, GTPase-activating protein for Rho-type proteins. The sequence is that of Probable Rho-type GTPase-activating protein 4 (rga4) from Schizosaccharomyces pombe (strain 972 / ATCC 24843) (Fission yeast).